A 254-amino-acid polypeptide reads, in one-letter code: 5-oxoprolinase subunit A 1 (254 aa).

It belongs to the LamB/PxpA family. As to quaternary structure, forms a complex composed of PxpA, PxpB and PxpC.

The enzyme catalyses 5-oxo-L-proline + ATP + 2 H2O = L-glutamate + ADP + phosphate + H(+). Catalyzes the cleavage of 5-oxoproline to form L-glutamate coupled to the hydrolysis of ATP to ADP and inorganic phosphate. This is 5-oxoprolinase subunit A 1 from Burkholderia pseudomallei (strain K96243).